Here is a 572-residue protein sequence, read N- to C-terminus: Dihydroxy-acid dehydratase (572 aa).

Position 78 (aspartate 78) interacts with Mg(2+). Residue cysteine 119 coordinates [2Fe-2S] cluster. Mg(2+)-binding residues include aspartate 120 and lysine 121. The residue at position 121 (lysine 121) is an N6-carboxylysine. Cysteine 192 contributes to the [2Fe-2S] cluster binding site. Residue glutamate 459 coordinates Mg(2+). Serine 485 functions as the Proton acceptor in the catalytic mechanism.

Belongs to the IlvD/Edd family. In terms of assembly, homodimer. [2Fe-2S] cluster is required as a cofactor. Mg(2+) serves as cofactor.

The catalysed reaction is (2R)-2,3-dihydroxy-3-methylbutanoate = 3-methyl-2-oxobutanoate + H2O. It catalyses the reaction (2R,3R)-2,3-dihydroxy-3-methylpentanoate = (S)-3-methyl-2-oxopentanoate + H2O. Its pathway is amino-acid biosynthesis; L-isoleucine biosynthesis; L-isoleucine from 2-oxobutanoate: step 3/4. The protein operates within amino-acid biosynthesis; L-valine biosynthesis; L-valine from pyruvate: step 3/4. In terms of biological role, functions in the biosynthesis of branched-chain amino acids. Catalyzes the dehydration of (2R,3R)-2,3-dihydroxy-3-methylpentanoate (2,3-dihydroxy-3-methylvalerate) into 2-oxo-3-methylpentanoate (2-oxo-3-methylvalerate) and of (2R)-2,3-dihydroxy-3-methylbutanoate (2,3-dihydroxyisovalerate) into 2-oxo-3-methylbutanoate (2-oxoisovalerate), the penultimate precursor to L-isoleucine and L-valine, respectively. The chain is Dihydroxy-acid dehydratase from Helicobacter hepaticus (strain ATCC 51449 / 3B1).